Consider the following 268-residue polypeptide: Nickel import ATP-binding protein NikE (268 aa).

The ABC transporter domain occupies Leu4–Asn252. Gly45–Ser52 serves as a coordination point for ATP.

It belongs to the ABC transporter superfamily. Nickel importer (TC 3.A.1.5.3) family. As to quaternary structure, the complex is composed of two ATP-binding proteins (NikD and NikE), two transmembrane proteins (NikB and NikC) and a solute-binding protein (NikA).

Its subcellular location is the cell inner membrane. It catalyses the reaction Ni(2+)(out) + ATP + H2O = Ni(2+)(in) + ADP + phosphate + H(+). Its function is as follows. Part of the ABC transporter complex NikABCDE involved in nickel import. Responsible for energy coupling to the transport system. The chain is Nickel import ATP-binding protein NikE from Shigella flexneri serotype 5b (strain 8401).